The sequence spans 155 residues: Ribosome-binding factor A (155 aa).

Composition is skewed to basic and acidic residues over residues 116–125 (ARQRDQEVAR) and 142–155 (SPHEGRPESEADGW). The disordered stretch occupies residues 116–155 (ARQRDQEVARQAEGATPAGDANPYKTSPHEGRPESEADGW).

Belongs to the RbfA family. In terms of assembly, monomer. Binds 30S ribosomal subunits, but not 50S ribosomal subunits or 70S ribosomes.

The protein localises to the cytoplasm. Functionally, one of several proteins that assist in the late maturation steps of the functional core of the 30S ribosomal subunit. Associates with free 30S ribosomal subunits (but not with 30S subunits that are part of 70S ribosomes or polysomes). Required for efficient processing of 16S rRNA. May interact with the 5'-terminal helix region of 16S rRNA. The protein is Ribosome-binding factor A of Corynebacterium kroppenstedtii (strain DSM 44385 / JCM 11950 / CIP 105744 / CCUG 35717).